Consider the following 348-residue polypeptide: Protein-arginine N-acetylglucosaminyltransferase SseK2 (348 aa).

UDP-N-acetyl-alpha-D-glucosamine is bound by residues 64–66, Y88, and 237–240; these read QWF and YLDA. A DXD motif motif is present at residues 239-241; sequence DAD. D241 contributes to the Mn(2+) binding site. The active-site Proton acceptor is E271. UDP-N-acetyl-alpha-D-glucosamine is bound by residues N338, S340, and 345 to 348; that span reads SSWR. Mn(2+) is bound by residues N338 and S340.

Belongs to the glycosyltransferase NleB family. Mn(2+) serves as cofactor.

The protein localises to the secreted. The protein resides in the host Golgi apparatus. It catalyses the reaction L-arginyl-[protein] + UDP-N-acetyl-alpha-D-glucosamine = N(omega)-(N-acetyl-beta-D-glucosaminyl)-L-arginyl-[protein] + UDP + H(+). With respect to regulation, protein-arginine N-acetylglucosaminyltransferase activity is inhibited by 100066N compound (flavone analog) and 102644N compound (a substituted isoxazole). Its function is as follows. Protein-arginine N-acetylglucosaminyltransferase effector that catalyzes the transfer of a single N-acetylglucosamine (GlcNAc) to a conserved arginine residue in the death domain of host proteins such as FADD: arginine GlcNAcylation prevents homotypic/heterotypic death domain interactions. Also acts on host proteins without a death domain: catalyzes arginine GlcNAcylation of host small Rab1 GTPase, thereby preventing GTPase activity and leading to impaired host vesicular protein transport. In contrast to Ssek1, not able to disrupt TNF signaling in infected cells. This is Protein-arginine N-acetylglucosaminyltransferase SseK2 from Salmonella typhimurium (strain SL1344).